The chain runs to 204 residues: GATA transcription factor 14 (204 aa).

Basic and acidic residues predominate over residues 57-66; the sequence is REFDTNDSKP. Residues 57 to 102 form a disordered region; that stretch reads REFDTNDSKPSRNFSNLPTATRGRLHAPKRSGNKRGRQKRLSFKSP. A compositionally biased stretch (basic residues) spans 79 to 98; it reads GRLHAPKRSGNKRGRQKRLS. The GATA-type zinc-finger motif lies at 111–165; the sequence is GITDKSCSHCGTRKTPLWREGPRGAGTLCNACGMRYRTGRLLPEYRPASSPDFKP. The segment at 180 to 204 is disordered; it reads RERKSSPPNSFGFSESYHSTRKLGF. A compositionally biased stretch (polar residues) spans 185–196; that stretch reads SPPNSFGFSESY.

Belongs to the type IV zinc-finger family. Class A subfamily.

Its subcellular location is the nucleus. Functionally, transcriptional activator that specifically binds 5'-GATA-3' or 5'-GAT-3' motifs within gene promoters. May be involved in the regulation of some light-responsive genes. The polypeptide is GATA transcription factor 14 (GATA14) (Arabidopsis thaliana (Mouse-ear cress)).